Reading from the N-terminus, the 772-residue chain is Gelsolin (772 aa).

The N-terminal stretch at 1 to 17 (LGALVVALCALSPPARA) is a signal peptide. Positions 18-33 (ATASRGAPQARAPQGR) are excised as a propeptide. The disordered stretch occupies residues 19–38 (TASRGAPQARAPQGRVSPMR). The tract at residues 41 to 166 (TMVVEHPEFL…YKKGGVASGF (126 aa)) is actin-severing. The Gelsolin-like 1 repeat unit spans residues 66–148 (FDLVPVPPNL…VQGFESATFL (83 aa)). Y76 carries the phosphotyrosine modification. Ca(2+) is bound by residues G82, D83, E114, D126, G131, and A133. The segment at 113-116 (DESG) is actin-actin interfilament contact point. Residue 152–159 (KSGLKYKK) participates in a 1,2-diacyl-sn-glycero-3-phospho-(1D-myo-inositol-4,5-bisphosphate) binding. V162 contributes to the Ca(2+) binding site. 178–186 (RLFQVKGRR) lines the a 1,2-diacyl-sn-glycero-3-phospho-(1D-myo-inositol-4,5-bisphosphate) pocket. Residues 188–260 (VRATEVPVSW…SEEDAEPAGM (73 aa)) form a Gelsolin-like 2 repeat. Ca(2+) is bound by residues G203 and D204. A disulfide bridge connects residues C205 and C218. Residues E226, D276, E319, D320, and E344 each coordinate Ca(2+). The stretch at 307–379 (DENPFAQGAL…LPEGGETPLF (73 aa)) is one Gelsolin-like 3 repeat. Phosphotyrosine occurs at positions 399 and 455. Residues 424–772 (AAQHGMDDDG…LDRAIAELAA (349 aa)) are actin-binding, Ca-sensitive. Residues 445-526 (SNKVPVDPAT…VQGKEPAHLM (82 aa)) form a Gelsolin-like 4 repeat. 7 residues coordinate Ca(2+): G461, D462, E492, D504, G509, P511, and T541. The stretch at 567-632 (RAVEVIPKAG…AEGSEPDSFW (66 aa)) is one Gelsolin-like 5 repeat. N6-acetyllysine is present on K574. Ca(2+) is bound by residues N581 and D582. The residue at position 593 (Y593) is a Phosphotyrosine. E604 contributes to the Ca(2+) binding site. At Y641 the chain carries Phosphotyrosine. The Gelsolin-like 6 repeat unit spans residues 671 to 746 (VEEVPGELMQ…VKQGFEPPSF (76 aa)). Ca(2+) contacts are provided by D686, D687, and E709. Position 732 is a phosphothreonine (T732).

The protein belongs to the villin/gelsolin family. Binds to actin and to fibronectin. Identified in a complex composed of ACTA1, COBL, GSN and TMSB4X. Interacts with the inactive form of EIF2AK2/PKR. Interacts with FLII. In terms of processing, phosphorylated on tyrosine residues in vitro.

It is found in the cytoplasm. The protein localises to the cytoskeleton. Its subcellular location is the secreted. In terms of biological role, calcium-regulated, actin-modulating protein that binds to the plus (or barbed) ends of actin monomers or filaments, preventing monomer exchange (end-blocking or capping). It can promote the assembly of monomers into filaments (nucleation) as well as sever filaments already formed. Plays a role in ciliogenesis. This is Gelsolin (GSN) from Sus scrofa (Pig).